The sequence spans 182 residues: Fucoxanthin-chlorophyll a-c binding protein D, chloroplastic (182 aa).

The transit peptide at 1–4 (AMKM) directs the protein to the chloroplast. The next 3 helical transmembrane spans lie at 46-66 (IAMLAIAGHLTQQNARLPGML), 87-107 (IPPGGLAQIFGFIGFLELAVM), and 148-168 (GRAAQMGILALMVHEELNNKP).

Belongs to the fucoxanthin chlorophyll protein family. In terms of assembly, the LHC complex of chromophytic algae is composed of fucoxanthin, chlorophyll A and C bound non-covalently by fucoxanthin chlorophyll proteins (FCPs). The ratio of pigments in this LHC is; fucoxanthin: chlorophyll C: chlorophyll A; (0.6-1): (0.1-0.3): (1).

It is found in the plastid. The protein localises to the chloroplast thylakoid membrane. Functionally, the light-harvesting complex (LHC) functions as a light receptor, it captures and delivers excitation energy to photosystems with which it is closely associated. Energy is transferred from the carotenoid and chlorophyll C (or B) to chlorophyll A and the photosynthetic reaction centers where it is used to synthesize ATP and reducing power. The chain is Fucoxanthin-chlorophyll a-c binding protein D, chloroplastic (FCPD) from Macrocystis pyrifera (Giant kelp).